Here is a 489-residue protein sequence, read N- to C-terminus: MDLESESSALESVDDNVLIQQSASNVCDDGRSLDNGSCSDESVKLLSTSNSVELGKPMSFDSPGDGGGAYSPVLKGQGLRKWRRIRRDLVKDTSANMENSKALKRGLSGVAHSHGKQMQFQSPEVEQESQGSVGSVNMLKSSGDGFDILGSSGYDSRFVAGVGFSAGMDLEIDDDRSSKSSTVARAPKVIRYEKPMISSGQGGNIRVENSKKHRGESVDFEKENSYSSLESDSRKQSGRMMDYNGENGETSMRKDDAGGEGGESINTDNRYSDEMDPLTEAINGFLALQDALEKEVQQFQEIGNEPMPQHHEQVSEANSPHPEIVTLVNNVEQLENMLEETRSMLEVKESHIRDLESTTNQSKHSWGGTEIVVEDIFRQKIEAEIEYLIYSRSIDNLNSQMKLIDEQESLAEEQTHETLNKLGRVQTKAANFTNRAQDLQNDCIEITGTIKKRACKITSYVLIQLVLLSTVVLLLLSQLLPEPDTVVPT.

The segment at S49–V73 is disordered. Short sequence motifs (nuclear localization signal) lie at residues R80–K81, R83–R84, and K104–R105. Residues P195–S264 form a disordered region. The segment covering G215–N224 has biased composition (basic and acidic residues). Residues E323 to I446 are a coiled coil. A KASH domain is found at S459–T489. Residues Y460–L480 form a helical membrane-spanning segment.

In terms of assembly, homodimer and heterodimer with WIP2. Component of Ran complexes at least composed of WIT1 or WIT2, RANGAP1 or RANGAP2, and WIP1 or WIP2 or WIP3. Interacts with RANGAP1, RANGAP2, WPP1/MAF1, and WPP2/MAF2. Interacts with SUN1 and SUN2. Interacts with KIN1. Core component of the LINC complex which is composed of inner nuclear membrane SUN domain-containing proteins coupled to outer nuclear membrane WIP and WIT proteins. The LINC complex also involves nucleoskeletal proteins CRWN/LINC and possibly KAKU4 and the cytoskeletal myosin KAKU1. Interacts with WIT1 and SUN2. Interacts with WIT2. Interacts with SUN3. In terms of tissue distribution, expressed in seedlings, roots, stems, leaves, and flowers.

It localises to the nucleus envelope. The protein resides in the nucleus membrane. In terms of biological role, mediates and enhances the nuclear envelope docking of RANGAP proteins mediated by WIT1 and WIT2 in the undifferentiated cells of root tips. As component of the SUN-WIP-WIT2-KAKU1 complex, mediates the transfer of cytoplasmic forces to the nuclear envelope (NE), leading to nuclear shape changes. The polypeptide is WPP domain-interacting protein 1 (WIP1) (Arabidopsis thaliana (Mouse-ear cress)).